The primary structure comprises 905 residues: Dopamine D2-like receptor (905 aa).

The tract at residues 1–23 (MLSPFDWRRGISSSGTGGTMAAQ) is disordered. The Extracellular segment spans residues 1–377 (MLSPFDWRRG…GELRVVDHNY (377 aa)). N-linked (GlcNAc...) asparagine glycosylation is found at N88, N146, N156, N166, N174, N257, N314, and N343. A helical membrane pass occupies residues 378 to 398 (WALILILFPILTLFGNILVIL). Residues 399 to 416 (SVCRERSLQTVTNYFIVS) are Cytoplasmic-facing. A helical membrane pass occupies residues 417-437 (LAIADLLVAVVVMPFAVYFLV). Over 438–450 (NGAWALPDVVCDF) the chain is Extracellular. Residues C448 and C525 are joined by a disulfide bond. The helical transmembrane segment at 451–471 (YIAMDVICSTSSIFNLVAISI) threads the bilayer. At 472–493 (DRYIAVTQPIKYAKHKNSRRVC) the chain is on the cytoplasmic side. The chain crosses the membrane as a helical span at residues 494 to 514 (LTILLVWAISAAIGSPIVLGL). Topologically, residues 515–531 (NNTPNREPDVCAFYNAD) are extracellular. A helical membrane pass occupies residues 532-552 (FILYSSLSSFYIPCIIMVFLY). Over 553–830 (WNIFKALRSR…AKKERKATKT (278 aa)) the chain is Cytoplasmic. Disordered stretches follow at residues 600 to 631 (SRHA…ISPD), 702 to 753 (ATSA…SVGV), and 780 to 799 (DSTL…KNSQ). The segment covering 702–722 (ATSAAPRSSGSPPDSPLPSGA) has biased composition (low complexity). Polar residues predominate over residues 723–734 (TLQRSSVSSQRR). The segment covering 735 to 746 (PTGDDSPKRGEP) has biased composition (basic and acidic residues). The helical transmembrane segment at 831–851 (LAIVLGVFLFCWLPFFSCNIM) threads the bilayer. Residues 852 to 869 (DAMCAKFKKDCRPGLTAY) are Extracellular-facing. Residues 870-890 (MMTTWLGYINSFVNPVIYTIF) traverse the membrane as a helical segment. Residues 891–905 (NPEFRKAFKKIMHMG) lie on the Cytoplasmic side of the membrane.

The protein belongs to the G-protein coupled receptor 1 family. Highest expression is in adult heads.

Its subcellular location is the cell membrane. Receptor for dopamine. The activity of this receptor is mediated by G proteins which inhibit adenylyl cyclase. This chain is Dopamine D2-like receptor, found in Drosophila melanogaster (Fruit fly).